Reading from the N-terminus, the 593-residue chain is NADH-quinone oxidoreductase subunit C/D (593 aa).

The interval 1-184 (MTADSVLSIP…DPYSLSAAKQ (184 aa)) is NADH dehydrogenase I subunit C. The tract at residues 208–593 (DFMFLNLGPN…IDFVMADVDR (386 aa)) is NADH dehydrogenase I subunit D.

In the N-terminal section; belongs to the complex I 30 kDa subunit family. The protein in the C-terminal section; belongs to the complex I 49 kDa subunit family. In terms of assembly, NDH-1 is composed of 13 different subunits. Subunits NuoB, CD, E, F, and G constitute the peripheral sector of the complex.

It is found in the cell inner membrane. It catalyses the reaction a quinone + NADH + 5 H(+)(in) = a quinol + NAD(+) + 4 H(+)(out). In terms of biological role, NDH-1 shuttles electrons from NADH, via FMN and iron-sulfur (Fe-S) centers, to quinones in the respiratory chain. The immediate electron acceptor for the enzyme in this species is believed to be ubiquinone. Couples the redox reaction to proton translocation (for every two electrons transferred, four hydrogen ions are translocated across the cytoplasmic membrane), and thus conserves the redox energy in a proton gradient. The chain is NADH-quinone oxidoreductase subunit C/D from Azotobacter vinelandii (strain DJ / ATCC BAA-1303).